Reading from the N-terminus, the 391-residue chain is Chorismate synthase (391 aa).

Arg39 and Arg45 together coordinate NADP(+). Residues Arg133–Ser135, Gln254–Ala255, Gly299, Lys314–Thr318, and Arg340 contribute to the FMN site.

Belongs to the chorismate synthase family. Homotetramer. It depends on FMNH2 as a cofactor.

It catalyses the reaction 5-O-(1-carboxyvinyl)-3-phosphoshikimate = chorismate + phosphate. It functions in the pathway metabolic intermediate biosynthesis; chorismate biosynthesis; chorismate from D-erythrose 4-phosphate and phosphoenolpyruvate: step 7/7. In terms of biological role, catalyzes the anti-1,4-elimination of the C-3 phosphate and the C-6 proR hydrogen from 5-enolpyruvylshikimate-3-phosphate (EPSP) to yield chorismate, which is the branch point compound that serves as the starting substrate for the three terminal pathways of aromatic amino acid biosynthesis. This reaction introduces a second double bond into the aromatic ring system. This Symbiobacterium thermophilum (strain DSM 24528 / JCM 14929 / IAM 14863 / T) protein is Chorismate synthase.